We begin with the raw amino-acid sequence, 74 residues long: Cyclin-dependent kinases regulatory subunit (74 aa).

Belongs to the CKS family. As to quaternary structure, forms a homohexamer that can probably bind six kinase subunits.

Functionally, binds to the catalytic subunit of the cyclin dependent kinases Cdk1 and Cdk2, and is essential for their biological function. The protein is Cyclin-dependent kinases regulatory subunit (Cks30A) of Drosophila melanogaster (Fruit fly).